The primary structure comprises 1685 residues: PHD and RING finger domain-containing protein 1 (1685 aa).

The tract at residues 1-82 (MDDDNLDELV…GSEDSEDGIE (82 aa)) is disordered. Over residues 41–81 (DSEDDTGSEQDDDTDGEETEGLSEEEDPEDRSGSEDSEDGI) the composition is skewed to acidic residues. An RING-type; degenerate zinc finger spans residues 109 to 150 (CPICLNAFRDQAVGTPETCAHYFCLDCIIEWSRNANSCPVDR). A PHD-type zinc finger spans residues 188-238 (PTFCEVCGRSDREDRLLLCDGCDAGYHMECLDPPLQEVPVDEWFCPECAVP). Disordered stretches follow at residues 333 to 390 (PLTP…KLKN), 449 to 483 (DSNGEQSADPPSPLSAKRRVLSRSALQSHQPVARP), 537 to 590 (SAKR…GLSC), 606 to 777 (TPVR…GSSF), and 809 to 860 (KVQR…LLPS). At Thr-335 the chain carries Phosphothreonine. Composition is skewed to basic residues over residues 339-364 (PAKRKRKAGRRKKVLGRKKTRSRSSV) and 372-387 (RAKKRQHRVRRTKGRK). 2 positions are modified to phosphoserine: Ser-450 and Ser-460. Polar residues-rich tracts occupy residues 606-625 (TPVRSDSSVTPRSGLSGNLS) and 637-662 (SPRLNGSNVRVGSASTKTMTHSNFPS). A compositionally biased stretch (basic and acidic residues) spans 671-682 (QKTDPRRPDFSK). Polar residues-rich tracts occupy residues 694 to 709 (SNSTQDQAPASGQTVE) and 737 to 751 (SSRGPQETGSHTSGS). Phosphoserine occurs at positions 817, 848, 849, 867, 870, 922, 948, 984, and 1002. Over residues 835–860 (PFDPTGSDSSPPSSSPESLGSGLLPS) the composition is skewed to low complexity. Disordered regions lie at residues 892–1229 (GTEM…VSEV), 1290–1355 (QLDD…APSD), and 1369–1390 (TTLSTPGVLPMGKDSPLLSGRG). The segment covering 922–934 (SDLEQEGLGEIEP) has biased composition (acidic residues). A compositionally biased stretch (low complexity) spans 1001–1010 (SSRSRSTSSS). Composition is skewed to basic residues over residues 1011-1031 (RSRKKTKKKKKVAREHQRTRS) and 1054-1064 (KRHRAKTKSRR). A compositionally biased stretch (basic and acidic residues) spans 1065-1075 (SSSDRASSQDR). Basic residues-rich tracts occupy residues 1089–1102 (GPWGHGRCWRKSRS) and 1117–1129 (SRRRKRRHSGSRS). Basic and acidic residues-rich tracts occupy residues 1130–1143 (RGRDGSPHSSLERD) and 1151–1165 (RSRERMDKKESMTRS). A phosphoserine mark is found at Ser-1135 and Ser-1139. The segment covering 1181 to 1191 (RTRRPHSREKH) has biased composition (basic residues). Residues 1192 to 1201 (PHSPEKKGAV) show a composition bias toward basic and acidic residues. Position 1205 is a phosphoserine (Ser-1205). Over residues 1292–1305 (DDMSSPPSPESTDS) the composition is skewed to low complexity. Residues Ser-1372 and Ser-1383 each carry the phosphoserine modification. Thr-1416 carries the post-translational modification Phosphothreonine. 3 disordered regions span residues 1421-1448 (EAEASTPALDRDPRTPLQRPQRPQEGDW), 1466-1501 (LPPPIHVLQESGLPDADPSQPPGVPRAEGPPAVGTL), and 1569-1591 (LAVPTTNNSEERTATPKTAAEKT). Residues 1577-1591 (SEERTATPKTAAEKT) show a composition bias toward basic and acidic residues. Residues 1589–1615 (EKTKKEEYMKKLHMQERAVEEVKLAIK) are a coiled coil.

Interacts with POLR2A (via the C-terminal domain).

The polypeptide is PHD and RING finger domain-containing protein 1 (Rattus norvegicus (Rat)).